Consider the following 351-residue polypeptide: UPF0764 protein C16orf89 homolog (351 aa).

The first 25 residues, 1-25 (MKSLKMLYPLFMLLVLSSKIDLSNQ), serve as a signal peptide directing secretion.

It belongs to the UPF0764 family. Homodimer.

Its subcellular location is the secreted. This chain is UPF0764 protein C16orf89 homolog, found in Danio rerio (Zebrafish).